The primary structure comprises 1782 residues: Signal-induced proliferation-associated 1-like protein 1 (1782 aa).

Disordered regions lie at residues 1 to 28 (MTSL…GAPK), 47 to 125 (GSSV…VSLN), and 140 to 171 (KNKT…RRIR). Basic and acidic residues predominate over residues 84–94 (PPRKENVKESS). Positions 95–125 (RSSQEIETSSCLESLSSKGSPVSQGSSVSLN) are enriched in low complexity. Residues Ser162, Ser187, Ser193, Ser208, Ser255, and Ser288 each carry the phosphoserine modification. The tract at residues 277–297 (EREKPLKRRSKSETGDSSIFR) is disordered. One can recognise a Rap-GAP domain in the interval 599-816 (LMKLDEQGLN…RTRQEYLKDL (218 aa)). One can recognise a PDZ domain in the interval 953 to 1031 (EMTLRRNGLG…VVIIPPHDDC (79 aa)). Disordered regions lie at residues 1069–1128 (QRNA…RLSP) and 1144–1213 (SQCR…SLAD). Ser1078, Ser1087, Ser1116, Ser1127, Ser1149, Ser1170, and Ser1181 each carry phosphoserine. Over residues 1080 to 1093 (QVPSQLQSPMTSRL) the composition is skewed to polar residues. Over residues 1149 to 1159 (SPSNLSSSSET) the composition is skewed to low complexity. Residues 1186–1205 (DRQNTQSDISGSGKSTPSWQ) are compositionally biased toward polar residues. Residues Ser1234 and Ser1249 each carry the phosphoserine modification. The segment at 1247-1285 (HLSPNKQGHSDSHYSSHSSSNTLSSNASSAHSDEKWYDG) is disordered. The segment covering 1261 to 1276 (SSHSSSNTLSSNASSA) has biased composition (low complexity). Ser1305 carries the phosphoserine; by PLK2 modification. The interval 1307–1342 (IDTASYGPSHGSTASLGASTSSPRSGPGKEKVAPLW) is disordered. Thr1309 bears the Phosphothreonine; by PLK2 mark. The segment covering 1315–1328 (SHGSTASLGASTSS) has biased composition (low complexity). Ser1328 carries the post-translational modification Phosphoserine; by CDK5. Position 1345 is a phosphoserine (Ser1345). A compositionally biased stretch (basic and acidic residues) spans 1358–1368 (TEGHGMDRKAE). The tract at residues 1358–1454 (TEGHGMDRKA…SSSGPRTFYP (97 aa)) is disordered. 5 positions are modified to phosphoserine: Ser1369, Ser1370, Ser1391, Ser1410, and Ser1412. The segment covering 1378-1410 (KSQGGSSPLSRENSTFSINDAASHTSTMSSRHS) has biased composition (polar residues). A compositionally biased stretch (low complexity) spans 1432–1447 (SSQLAPSFSSSSSSSS). A phosphoserine mark is found at Ser1507 and Ser1528. A Phosphothreonine modification is found at Thr1530. Phosphoserine is present on residues Ser1533, Ser1544, Ser1547, Ser1564, and Ser1567. Position 1580 is an asymmetric dimethylarginine (Arg1580). Residues Ser1582, Ser1624, Ser1626, Ser1629, Ser1687, Ser1690, Ser1707, Ser1708, and Ser1712 each carry the phosphoserine modification. Positions 1625 to 1647 (ASDSSLTDIQETRRQPIPDPGLM) are disordered. Residues 1713-1773 (PTLASKVDQL…ASDKLKKFTE (61 aa)) are a coiled coil.

In terms of assembly, interacts with DLG4, PDLIM5, PDLIM7 and LZTS3. Interacts with the actin cytoskeleton. Interacts (via PDZ domain) with EPHA4 (via PDZ motif); controls neuronal morphology through regulation of the RAP1 (RAP1A or RAP1B) and RAP2 (RAP2A, RAP2B or RAP2C) GTPases. In terms of processing, ubiquitinated and degraded by the SCF(BTRC) following phosphorylation by PLK2. Phosphorylated at Ser-1328 by CDK5, creating a docking site for the POLO box domains of PLK2. Subsequently, PLK2 binds and phosphorylates SIPA1L1, leading to ubiquitination and degradation by the proteasome.

The protein resides in the cytoplasm. Its subcellular location is the cytoskeleton. The protein localises to the postsynaptic density. It is found in the synapse. It localises to the synaptosome. Stimulates the GTPase activity of RAP2A. Promotes reorganization of the actin cytoskeleton and recruits DLG4 to F-actin. Contributes to the regulation of dendritic spine morphogenesis. The chain is Signal-induced proliferation-associated 1-like protein 1 (Sipa1l1) from Mus musculus (Mouse).